Reading from the N-terminus, the 613-residue chain is Dihydroxy-acid dehydratase (613 aa).

Aspartate 81 is a Mg(2+) binding site. Cysteine 122 serves as a coordination point for [2Fe-2S] cluster. Mg(2+) contacts are provided by aspartate 123 and lysine 124. Lysine 124 is modified (N6-carboxylysine). Cysteine 193 contacts [2Fe-2S] cluster. Residue glutamate 489 participates in Mg(2+) binding. Serine 515 functions as the Proton acceptor in the catalytic mechanism.

Belongs to the IlvD/Edd family. In terms of assembly, homodimer. It depends on [2Fe-2S] cluster as a cofactor. The cofactor is Mg(2+).

The enzyme catalyses (2R)-2,3-dihydroxy-3-methylbutanoate = 3-methyl-2-oxobutanoate + H2O. The catalysed reaction is (2R,3R)-2,3-dihydroxy-3-methylpentanoate = (S)-3-methyl-2-oxopentanoate + H2O. It functions in the pathway amino-acid biosynthesis; L-isoleucine biosynthesis; L-isoleucine from 2-oxobutanoate: step 3/4. Its pathway is amino-acid biosynthesis; L-valine biosynthesis; L-valine from pyruvate: step 3/4. Its function is as follows. Functions in the biosynthesis of branched-chain amino acids. Catalyzes the dehydration of (2R,3R)-2,3-dihydroxy-3-methylpentanoate (2,3-dihydroxy-3-methylvalerate) into 2-oxo-3-methylpentanoate (2-oxo-3-methylvalerate) and of (2R)-2,3-dihydroxy-3-methylbutanoate (2,3-dihydroxyisovalerate) into 2-oxo-3-methylbutanoate (2-oxoisovalerate), the penultimate precursor to L-isoleucine and L-valine, respectively. The sequence is that of Dihydroxy-acid dehydratase from Pseudomonas fluorescens (strain SBW25).